The chain runs to 233 residues: Ribose-5-phosphate isomerase A (233 aa).

Substrate is bound by residues 28-31 (SGST), 83-86 (DGAD), and 96-99 (KGGG). The active-site Proton acceptor is the glutamate 105. Lysine 123 is a binding site for substrate.

Belongs to the ribose 5-phosphate isomerase family. Homodimer.

It carries out the reaction aldehydo-D-ribose 5-phosphate = D-ribulose 5-phosphate. It participates in carbohydrate degradation; pentose phosphate pathway; D-ribose 5-phosphate from D-ribulose 5-phosphate (non-oxidative stage): step 1/1. Its function is as follows. Catalyzes the reversible conversion of ribose-5-phosphate to ribulose 5-phosphate. In Bartonella bacilliformis (strain ATCC 35685 / KC583 / Herrer 020/F12,63), this protein is Ribose-5-phosphate isomerase A.